The primary structure comprises 521 residues: Organic cation/carnitine transporter 6 (521 aa).

Over 1–37 the chain is Cytoplasmic; sequence MADPISEPLLSHLTDDSGVNEKTRLEALTFDKIVEQS. The helical transmembrane segment at 38 to 58 threads the bilayer; that stretch reads LSDFGFWQFFQISLVGLALLF. Topologically, residues 59 to 123 are extracellular; sequence DAQQIFITVY…GLECSSSLLR (65 aa). Residue Asn-79 is glycosylated (N-linked (GlcNAc...) asparagine). The helical transmembrane segment at 124 to 144 threads the bilayer; sequence GMPSSAFYIGAIVGGFFLALI. The Cytoplasmic segment spans residues 145-154; sequence PDDSLGRKKL. A helical membrane pass occupies residues 155–177; that stretch reads VLFSTFAMSITSISVIFSTNVWI. Topologically, residues 178 to 182 are extracellular; that stretch reads YTFLK. The helical transmembrane segment at 183 to 200 threads the bilayer; it reads FIIGFSRSQTWSYALVLI. ATP is bound at residue 200-207; that stretch reads ISERVSTR. The Cytoplasmic portion of the chain corresponds to 201-213; the sequence is SERVSTRWRPRAT. A helical transmembrane segment spans residues 214–234; it reads MIPFTLFVLGFMSLSGIAFLA. Topologically, residues 235 to 241 are extracellular; that stretch reads QDSSWRY. Residues 242-262 traverse the membrane as a helical segment; sequence LYLYTSVPAVFYCIFLYLFAL. Topologically, residues 263–326 are cytoplasmic; sequence ESPRWLHMQG…FFFRKWAFRR (64 aa). Residues 327 to 347 form a helical membrane-spanning segment; it reads ILVVMIIMFGLGISYYGVPLA. At 348–356 the chain is on the extracellular side; the sequence is ARDIDVNIY. A helical transmembrane segment spans residues 357–377; that stretch reads LSETLNALVELPTFVITPILL. The Cytoplasmic segment spans residues 378-385; sequence ERFNRRSS. Residues 386-406 traverse the membrane as a helical segment; that stretch reads VLVNTLLGGASGVLCFVLSIL. Residues 407–412 are Extracellular-facing; sequence GKTEIA. The helical transmembrane segment at 413 to 433 threads the bilayer; the sequence is FAFELGTFFCARIGFNLMAVF. The Cytoplasmic portion of the chain corresponds to 434 to 447; the sequence is MVEMFPTCVRSSAT. The chain crosses the membrane as a helical span at residues 448-468; that stretch reads MMFRQALVVGGACCPLIASIG. At 469 to 473 the chain is on the extracellular side; sequence RYIPS. A helical transmembrane segment spans residues 474–494; that stretch reads VSFAIFGIAMSGLGMFVLILP. Residues 495–521 are Cytoplasmic-facing; the sequence is ETKGLSLCDSMEEQEKRDQAVNTSHVC.

It belongs to the major facilitator (TC 2.A.1) superfamily. Organic cation transporter (TC 2.A.1.19) family. As to expression, expressed in roots and stems. In the stem of secondary inflorescences, localized to the phloem. Also present in flowers, specifically in the stamen, in the filaments and the connective, and restricted to major veins in leaves.

It localises to the vacuole membrane. In terms of biological role, high affinity carnitine transporter involved in the active cellular uptake of carnitine. Also transports organic cations. The sequence is that of Organic cation/carnitine transporter 6 (OCT6) from Arabidopsis thaliana (Mouse-ear cress).